The chain runs to 354 residues: Phospho-N-acetylmuramoyl-pentapeptide-transferase (354 aa).

The next 10 membrane-spanning stretches (helical) occupy residues 23–43 (FSFF…IAWA), 66–86 (TPTM…LLCA), 88–108 (LDNV…ALGF), 130–150 (LAVQ…HGEL), 161–181 (FALL…IVAA), 193–213 (GLAS…AYIC), 230–250 (VGET…FLWF), 257–277 (VFMG…MGVM), 282–302 (ILLI…ILQV), and 331–351 (KIIV…LTAL).

Belongs to the glycosyltransferase 4 family. MraY subfamily. Requires Mg(2+) as cofactor.

It is found in the cell inner membrane. The enzyme catalyses UDP-N-acetyl-alpha-D-muramoyl-L-alanyl-gamma-D-glutamyl-meso-2,6-diaminopimeloyl-D-alanyl-D-alanine + di-trans,octa-cis-undecaprenyl phosphate = di-trans,octa-cis-undecaprenyl diphospho-N-acetyl-alpha-D-muramoyl-L-alanyl-D-glutamyl-meso-2,6-diaminopimeloyl-D-alanyl-D-alanine + UMP. It participates in cell wall biogenesis; peptidoglycan biosynthesis. Functionally, catalyzes the initial step of the lipid cycle reactions in the biosynthesis of the cell wall peptidoglycan: transfers peptidoglycan precursor phospho-MurNAc-pentapeptide from UDP-MurNAc-pentapeptide onto the lipid carrier undecaprenyl phosphate, yielding undecaprenyl-pyrophosphoryl-MurNAc-pentapeptide, known as lipid I. This is Phospho-N-acetylmuramoyl-pentapeptide-transferase from Campylobacter curvus (strain 525.92).